We begin with the raw amino-acid sequence, 207 residues long: Macrophage immunometabolism regulator (207 aa).

N-acetylmethionine is present on methionine 1. The interval 1–41 (MEVDINGDSRSTLTTLPLPVAEGSSPGKAEAEKPRCSSTPC) is disordered. Residues serine 25 and serine 167 each carry the phosphoserine modification.

The protein belongs to the UNC119-binding protein family. As to quaternary structure, interacts with UNC119 and UNC119B; interaction preferentially takes place when UNC119 and UNC119B are unliganded with myristoylated proteins. Highly expressed in photoreceptors.

It localises to the cytoplasm. It is found in the cell projection. Its subcellular location is the cilium. Regulates the macrophage function, by enhancing the resolution of inflammation and wound repair functions mediated by M2 macrophages. The regulation of macrophage function is, due at least in part, to its ability to inhibit glycolysis. May also play a role in trafficking of proteins via its interaction with UNC119 and UNC119B cargo adapters: may help the release of UNC119 and UNC119B cargo or the recycling of UNC119 and UNC119B. May play a role in ciliary membrane localization via its interaction with UNC119B and protein transport into photoreceptor cells. The chain is Macrophage immunometabolism regulator from Mus musculus (Mouse).